A 157-amino-acid polypeptide reads, in one-letter code: Transcription elongation factor GreA (157 aa).

The stretch at 13–75 (RARLEAELEE…EIKSILARAQ (63 aa)) forms a coiled coil.

This sequence belongs to the GreA/GreB family.

In terms of biological role, necessary for efficient RNA polymerase transcription elongation past template-encoded arresting sites. The arresting sites in DNA have the property of trapping a certain fraction of elongating RNA polymerases that pass through, resulting in locked ternary complexes. Cleavage of the nascent transcript by cleavage factors such as GreA or GreB allows the resumption of elongation from the new 3'terminus. GreA releases sequences of 2 to 3 nucleotides. This is Transcription elongation factor GreA from Roseiflexus castenholzii (strain DSM 13941 / HLO8).